The following is an 83-amino-acid chain: CDC42 small effector protein 2 (83 aa).

2 S-palmitoyl cysteine lipidation sites follow: C10 and C11. Positions 28 to 41 constitute a CRIB domain; that stretch reads IGEPTNFVHTAHVG. Phosphoserine occurs at positions 42 and 51.

Belongs to the CDC42SE/SPEC family. As to quaternary structure, interacts with CDC42 (in GTP-bound form). Interacts weakly with RAC1 and not at all with RHOA.

It is found in the cytoplasm. Its subcellular location is the cytoskeleton. The protein localises to the cell membrane. It localises to the cell projection. The protein resides in the phagocytic cup. Its function is as follows. Probably involved in the organization of the actin cytoskeleton by acting downstream of CDC42, inducing actin filament assembly. Alters CDC42-induced cell shape changes. In activated T-cells, may play a role in CDC42-mediated F-actin accumulation at the immunological synapse. May play a role in early contractile events in phagocytosis in macrophages. The polypeptide is CDC42 small effector protein 2 (Cdc42se2) (Rattus norvegicus (Rat)).